Consider the following 208-residue polypeptide: Ubiquinone biosynthesis protein COQ4 homolog, mitochondrial (208 aa).

The Zn(2+) site is built by His-105, Asp-106, His-109, and Glu-122.

It belongs to the COQ4 family. As to quaternary structure, component of a multi-subunit COQ enzyme complex. Zn(2+) serves as cofactor.

It is found in the mitochondrion inner membrane. The catalysed reaction is a 4-hydroxy-3-methoxy-5-(all-trans-polyprenyl)benzoate + H(+) = a 2-methoxy-6-(all-trans-polyprenyl)phenol + CO2. It functions in the pathway cofactor biosynthesis; ubiquinone biosynthesis. In terms of biological role, lyase that catalyzes the C1-decarboxylation of 4-hydroxy-3-methoxy-5-(all-trans-polyprenyl)benzoic acid into 2-methoxy-6-(all-trans-polyprenyl)phenol during ubiquinone biosynthesis. The polypeptide is Ubiquinone biosynthesis protein COQ4 homolog, mitochondrial (Nematostella vectensis (Starlet sea anemone)).